A 438-amino-acid chain; its full sequence is 3-phosphoshikimate 1-carboxyvinyltransferase (438 aa).

3-phosphoshikimate contacts are provided by lysine 26, serine 27, and arginine 31. A phosphoenolpyruvate-binding site is contributed by lysine 26. Residues glycine 99 and arginine 127 each contribute to the phosphoenolpyruvate site. 3-phosphoshikimate-binding residues include serine 172, glutamine 174, aspartate 320, and lysine 347. Phosphoenolpyruvate is bound at residue glutamine 174. Residue aspartate 320 is the Proton acceptor of the active site. The phosphoenolpyruvate site is built by arginine 351 and arginine 392.

Belongs to the EPSP synthase family. In terms of assembly, monomer.

The protein resides in the cytoplasm. The enzyme catalyses 3-phosphoshikimate + phosphoenolpyruvate = 5-O-(1-carboxyvinyl)-3-phosphoshikimate + phosphate. The protein operates within metabolic intermediate biosynthesis; chorismate biosynthesis; chorismate from D-erythrose 4-phosphate and phosphoenolpyruvate: step 6/7. Functionally, catalyzes the transfer of the enolpyruvyl moiety of phosphoenolpyruvate (PEP) to the 5-hydroxyl of shikimate-3-phosphate (S3P) to produce enolpyruvyl shikimate-3-phosphate and inorganic phosphate. This chain is 3-phosphoshikimate 1-carboxyvinyltransferase, found in Xanthomonas campestris pv. campestris (strain 8004).